We begin with the raw amino-acid sequence, 284 residues long: Four and a half LIM domains protein 5 (284 aa).

A C4-type zinc finger spans residues 8–32 (CQYCTSSLIGKKYVLKDDNLYCISC). LIM zinc-binding domains are found at residues 39 to 100 (NYCE…ECSS), 101 to 160 (KCFH…KEFA), and 161 to 220 (HYCN…LYAK).

Interacts with CREM (via the third LIM domain). Interacts (via second LIM domain) with SPAG8. As to expression, testis-specific, temporal expression is coordinated with CREM.

The protein resides in the nucleus. Its function is as follows. May be involved in the regulation of spermatogenesis. Stimulates CREM transcriptional activity in a phosphorylation-independent manner. The polypeptide is Four and a half LIM domains protein 5 (Fhl5) (Mus musculus (Mouse)).